A 283-amino-acid polypeptide reads, in one-letter code: Pantothenate synthetase (283 aa).

An ATP-binding site is contributed by 30–37 (MGNLHLGH). Histidine 37 serves as the catalytic Proton donor. Glutamine 61 provides a ligand contact to (R)-pantoate. Position 61 (glutamine 61) interacts with beta-alanine. 149–152 (GQKD) provides a ligand contact to ATP. Glutamine 155 serves as a coordination point for (R)-pantoate. Residues isoleucine 178 and 186-189 (MSSR) each bind ATP.

Belongs to the pantothenate synthetase family. As to quaternary structure, homodimer.

The protein localises to the cytoplasm. The enzyme catalyses (R)-pantoate + beta-alanine + ATP = (R)-pantothenate + AMP + diphosphate + H(+). The protein operates within cofactor biosynthesis; (R)-pantothenate biosynthesis; (R)-pantothenate from (R)-pantoate and beta-alanine: step 1/1. Catalyzes the condensation of pantoate with beta-alanine in an ATP-dependent reaction via a pantoyl-adenylate intermediate. The protein is Pantothenate synthetase of Shewanella halifaxensis (strain HAW-EB4).